A 469-amino-acid polypeptide reads, in one-letter code: Glutamate--tRNA ligase (469 aa).

Residues Pro-9–Gly-19 carry the 'HIGH' region motif. Positions 98, 100, 125, and 127 each coordinate Zn(2+). The short motif at Lys-236–Arg-240 is the 'KMSKS' region element. Lys-239 serves as a coordination point for ATP.

The protein belongs to the class-I aminoacyl-tRNA synthetase family. Glutamate--tRNA ligase type 1 subfamily. As to quaternary structure, monomer. The cofactor is Zn(2+).

The protein localises to the cytoplasm. The catalysed reaction is tRNA(Glu) + L-glutamate + ATP = L-glutamyl-tRNA(Glu) + AMP + diphosphate. In terms of biological role, catalyzes the attachment of glutamate to tRNA(Glu) in a two-step reaction: glutamate is first activated by ATP to form Glu-AMP and then transferred to the acceptor end of tRNA(Glu). This Shewanella loihica (strain ATCC BAA-1088 / PV-4) protein is Glutamate--tRNA ligase.